Here is a 159-residue protein sequence, read N- to C-terminus: Ribosomal RNA large subunit methyltransferase H (159 aa).

S-adenosyl-L-methionine is bound by residues leucine 76, glycine 108, and 127–132 (FGRLTL).

This sequence belongs to the RNA methyltransferase RlmH family. As to quaternary structure, homodimer.

It localises to the cytoplasm. The catalysed reaction is pseudouridine(1915) in 23S rRNA + S-adenosyl-L-methionine = N(3)-methylpseudouridine(1915) in 23S rRNA + S-adenosyl-L-homocysteine + H(+). Its function is as follows. Specifically methylates the pseudouridine at position 1915 (m3Psi1915) in 23S rRNA. This Listeria welshimeri serovar 6b (strain ATCC 35897 / DSM 20650 / CCUG 15529 / CIP 8149 / NCTC 11857 / SLCC 5334 / V8) protein is Ribosomal RNA large subunit methyltransferase H.